Consider the following 197-residue polypeptide: MTETFFDKPLACREIKEIPGLLEFDIPVRGDNRGWFKENFQKEKMLPIGFPERFFEEGKLQNNVSFSRQHVLRGLHAEPWDKYISVADDGKVLGAWVDLREGETFGNVYQTVIDASKGMFVPRGVANGFQVLSETVSYSYLVNDYWALDLKPKYAFVNYADPSLGITWENLAAAEVSEADKNHPLLSDVKPLKPKDL.

Residue histidine 76 is the Proton acceptor of the active site. The Proton donor role is filled by tyrosine 140.

Could catalyze a 3,5-epimerization. This is Protein RmlC homolog (rfbC) from Streptococcus pyogenes serotype M6 (strain ATCC BAA-946 / MGAS10394).